Here is a 472-residue protein sequence, read N- to C-terminus: Ribosomal protein uS12 methylthiotransferase RimO (472 aa).

Residues 33 to 143 (NRIGFVSLGC…VLKHVHKYVP (111 aa)) enclose the MTTase N-terminal domain. 6 residues coordinate [4Fe-4S] cluster: Cys42, Cys78, Cys107, Cys175, Cys179, and Cys182. The 238-residue stretch at 161–398 (LTPKHYAYLK…MEVQAEISAE (238 aa)) folds into the Radical SAM core domain. One can recognise a TRAM domain in the interval 401-467 (ARFVGRTLDI…EHDLWAEVVD (67 aa)).

Belongs to the methylthiotransferase family. RimO subfamily. The cofactor is [4Fe-4S] cluster.

The protein resides in the cytoplasm. It catalyses the reaction L-aspartate(89)-[ribosomal protein uS12]-hydrogen + (sulfur carrier)-SH + AH2 + 2 S-adenosyl-L-methionine = 3-methylsulfanyl-L-aspartate(89)-[ribosomal protein uS12]-hydrogen + (sulfur carrier)-H + 5'-deoxyadenosine + L-methionine + A + S-adenosyl-L-homocysteine + 2 H(+). Its function is as follows. Catalyzes the methylthiolation of an aspartic acid residue of ribosomal protein uS12. In Shewanella baltica (strain OS185), this protein is Ribosomal protein uS12 methylthiotransferase RimO.